The following is a 212-amino-acid chain: Adenylate kinase (212 aa).

Position 10 to 15 (10 to 15) interacts with ATP; sequence GAGKGT. An NMP region spans residues 30–59; it reads AIGDIFRAIIKTSSKDAEVINSYVEQGKLI. Residues arginine 36, 57–59, 85–88, and glutamine 92 contribute to the AMP site; these read KLI and GYPR. The segment at 122-160 is LID; it reads GRYSCKSCGKIYNDYFLKPRIDKICDVCKSSVFEYRKDD. Residue arginine 123 coordinates ATP. The Zn(2+) site is built by cysteine 126 and cysteine 129. ATP is bound at residue 132–133; it reads IY. 2 residues coordinate Zn(2+): cysteine 146 and cysteine 149. Residues arginine 157 and arginine 168 each contribute to the AMP site. An ATP-binding site is contributed by lysine 196.

The protein belongs to the adenylate kinase family. Monomer.

The protein localises to the cytoplasm. It catalyses the reaction AMP + ATP = 2 ADP. It participates in purine metabolism; AMP biosynthesis via salvage pathway; AMP from ADP: step 1/1. Its function is as follows. Catalyzes the reversible transfer of the terminal phosphate group between ATP and AMP. Plays an important role in cellular energy homeostasis and in adenine nucleotide metabolism. In Rickettsia bellii (strain RML369-C), this protein is Adenylate kinase.